Consider the following 379-residue polypeptide: MFGMLRALKTHVEAPIVVATRAASTNAEKLEEIRERLAKGPNFQDFVQNPDNSRSEWENYEGKLRREKGEEQRLRLPPWLKTTIPVGKNYAKIKAQMRELKLSTVCEEARCPNIGECWGGGEHGTQTATIMLMGDTCTRGCRFCSVKTARKPPPLDVNEPVNTATAIASWGLDYIVLTSVDRDDLPDGGSKHIAETVREIKARNSNIFVECLVPDFRGNLECVETIANSGLDVYAHNIETVEKLTPYVRDRRAHYRQTLQVLTEAKRFNPNLITKSSIMLGLGETDEEIESTLKDLRTAGVDCVTLGQYMQPTNKHLKVIEYVTPEKFKHWEERGNELGFLYTASGPLVRSSYKAGEFFITSILENRKKRQNATELSKE.

[4Fe-4S] cluster is bound by residues C106, C111, C117, C137, C141, C144, and S352. One can recognise a Radical SAM core domain in the interval 122–341; sequence EHGTQTATIM…EERGNELGFL (220 aa).

This sequence belongs to the radical SAM superfamily. Lipoyl synthase family. Requires [4Fe-4S] cluster as cofactor.

The protein resides in the mitochondrion. The enzyme catalyses [[Fe-S] cluster scaffold protein carrying a second [4Fe-4S](2+) cluster] + N(6)-octanoyl-L-lysyl-[protein] + 2 oxidized [2Fe-2S]-[ferredoxin] + 2 S-adenosyl-L-methionine + 4 H(+) = [[Fe-S] cluster scaffold protein] + N(6)-[(R)-dihydrolipoyl]-L-lysyl-[protein] + 4 Fe(3+) + 2 hydrogen sulfide + 2 5'-deoxyadenosine + 2 L-methionine + 2 reduced [2Fe-2S]-[ferredoxin]. The protein operates within protein modification; protein lipoylation via endogenous pathway; protein N(6)-(lipoyl)lysine from octanoyl-[acyl-carrier-protein]: step 2/2. Catalyzes the radical-mediated insertion of two sulfur atoms into the C-6 and C-8 positions of the octanoyl moiety bound to the lipoyl domains of lipoate-dependent enzymes, thereby converting the octanoylated domains into lipoylated derivatives. This is Lipoyl synthase 1, mitochondrial from Drosophila yakuba (Fruit fly).